The sequence spans 249 residues: Adenosylcobinamide-GDP ribazoletransferase (249 aa).

Helical transmembrane passes span 32–52 (MVAF…TWFG), 53–73 (ATWL…WGAI), 107–127 (IGTM…LFVL), 136–156 (ALIV…FWFP), 190–210 (LLWW…IIIA), and 224–244 (TYGA…AALV).

This sequence belongs to the CobS family. The cofactor is Mg(2+).

It localises to the cell membrane. The enzyme catalyses alpha-ribazole + adenosylcob(III)inamide-GDP = adenosylcob(III)alamin + GMP + H(+). It catalyses the reaction alpha-ribazole 5'-phosphate + adenosylcob(III)inamide-GDP = adenosylcob(III)alamin 5'-phosphate + GMP + H(+). It functions in the pathway cofactor biosynthesis; adenosylcobalamin biosynthesis; adenosylcobalamin from cob(II)yrinate a,c-diamide: step 7/7. In terms of biological role, joins adenosylcobinamide-GDP and alpha-ribazole to generate adenosylcobalamin (Ado-cobalamin). Also synthesizes adenosylcobalamin 5'-phosphate from adenosylcobinamide-GDP and alpha-ribazole 5'-phosphate. This chain is Adenosylcobinamide-GDP ribazoletransferase, found in Herpetosiphon aurantiacus (strain ATCC 23779 / DSM 785 / 114-95).